A 491-amino-acid polypeptide reads, in one-letter code: Protein nucleotidyltransferase YdiU (491 aa).

Residues glycine 94, glycine 96, arginine 97, lysine 117, aspartate 129, glycine 130, arginine 180, and arginine 187 each coordinate ATP. The Proton acceptor role is filled by aspartate 256. Residues asparagine 257 and aspartate 266 each coordinate Mg(2+). Aspartate 266 contacts ATP.

The protein belongs to the SELO family. Mg(2+) is required as a cofactor. Requires Mn(2+) as cofactor.

It carries out the reaction L-seryl-[protein] + ATP = 3-O-(5'-adenylyl)-L-seryl-[protein] + diphosphate. It catalyses the reaction L-threonyl-[protein] + ATP = 3-O-(5'-adenylyl)-L-threonyl-[protein] + diphosphate. The enzyme catalyses L-tyrosyl-[protein] + ATP = O-(5'-adenylyl)-L-tyrosyl-[protein] + diphosphate. The catalysed reaction is L-histidyl-[protein] + UTP = N(tele)-(5'-uridylyl)-L-histidyl-[protein] + diphosphate. It carries out the reaction L-seryl-[protein] + UTP = O-(5'-uridylyl)-L-seryl-[protein] + diphosphate. It catalyses the reaction L-tyrosyl-[protein] + UTP = O-(5'-uridylyl)-L-tyrosyl-[protein] + diphosphate. Functionally, nucleotidyltransferase involved in the post-translational modification of proteins. It can catalyze the addition of adenosine monophosphate (AMP) or uridine monophosphate (UMP) to a protein, resulting in modifications known as AMPylation and UMPylation. This is Protein nucleotidyltransferase YdiU from Alkaliphilus metalliredigens (strain QYMF).